The sequence spans 1172 residues: Structural maintenance of chromosomes protein 2 (1172 aa).

ATP is bound at residue 32-39; it reads GLNGSGKS. Coiled-coil stretches lie at residues 172 to 204 and 258 to 507; these read RMFEERKEKAFRTMQRKEAKVEEINTLLREEIE and SHIA…AYME. The SMC hinge domain maps to 520–640; sequence SKVKGLVAQL…CDTPESAKKV (121 aa). A coiled-coil region spans residues 676–941; it reads LLQIQKLNSL…INHLEKENDW (266 aa).

Belongs to the SMC family. SMC2 subfamily. As to quaternary structure, forms a heterodimer with cut3/smc4. Component of the condensin complex, which contains the cut3 and cut14 heterodimer, and three non smc subunits that probably regulate the complex: cnd1, cnd2 and cnd3.

It is found in the nucleus. The protein localises to the cytoplasm. The protein resides in the chromosome. Central component of the condensin complex, a complex required for conversion of interphase chromatin into mitotic-like condense chromosomes. The condensin complex probably introduces positive supercoils into relaxed DNA in the presence of type I topoisomerases and converts nicked DNA into positive knotted forms in the presence of type II topoisomerases. In Schizosaccharomyces pombe (strain 972 / ATCC 24843) (Fission yeast), this protein is Structural maintenance of chromosomes protein 2 (cut14).